Consider the following 371-residue polypeptide: Cytochrome b (371 aa).

The next 4 helical transmembrane spans lie at Phe-25–Val-45, Trp-69–Ile-90, Trp-105–Leu-125, and Phe-170–Ile-190. Positions 75 and 89 each coordinate heme b. Heme b is bound by residues His-174 and His-188. His-193 contacts a ubiquinone. The next 4 membrane-spanning stretches (helical) occupy residues Tyr-218 to Met-238, Leu-280 to His-300, Leu-312 to Thr-332, and Phe-339 to Pro-358.

It belongs to the cytochrome b family. In terms of assembly, the cytochrome bc1 complex contains 3 respiratory subunits (MT-CYB, CYC1 and UQCRFS1), 2 core proteins (UQCRC1 and UQCRC2) and probably 6 low-molecular weight proteins. It depends on heme b as a cofactor.

The protein localises to the mitochondrion inner membrane. Functionally, component of the ubiquinol-cytochrome c reductase complex (complex III or cytochrome b-c1 complex) that is part of the mitochondrial respiratory chain. The b-c1 complex mediates electron transfer from ubiquinol to cytochrome c. Contributes to the generation of a proton gradient across the mitochondrial membrane that is then used for ATP synthesis. This is Cytochrome b (MT-CYB) from Toxicocalamus preussi (Preuss's forest snake).